The chain runs to 186 residues: Elongation factor P (186 aa).

Belongs to the elongation factor P family.

Its subcellular location is the cytoplasm. The protein operates within protein biosynthesis; polypeptide chain elongation. Involved in peptide bond synthesis. Stimulates efficient translation and peptide-bond synthesis on native or reconstituted 70S ribosomes in vitro. Probably functions indirectly by altering the affinity of the ribosome for aminoacyl-tRNA, thus increasing their reactivity as acceptors for peptidyl transferase. This chain is Elongation factor P, found in Neisseria gonorrhoeae (strain NCCP11945).